Reading from the N-terminus, the 379-residue chain is Transcription termination factor 1a, mitochondrial (379 aa).

The N-terminal 37 residues, 1–37 (MASRNIWCVRRNFLFDLRDWMLQYSAEVFLKSISFRP), are a transit peptide targeting the mitochondrion. Interaction with DNA regions lie at residues 151–152 (RS), 229–233 (QSTKR), 306–313 (SEKKFNDK), 337–340 (SINT), and 366–373 (SQRRYEAK).

The protein belongs to the mTERF family. In terms of assembly, monomer. In terms of processing, phosphoprotein with mostly four phosphate groups. While the DNA-binding activity is unaffected by the phosphorylation state, only the phosphorylated form of the protein is active for termination activity. Functioning seems to be regulated by phosphorylation. Predominantly expressed in heart and liver, with extremely low levels in other tissues. Expressed strongly in the heart and at lower levels in brain, liver and kidney.

Its subcellular location is the mitochondrion. Transcription termination factor. Binds to a 28 bp region within the tRNA(Leu(uur)) gene at a position immediately adjacent to and downstream of the 16S rRNA gene; this region comprises a tridecamer sequence critical for directing accurate termination. Binds DNA along the major grove and promotes DNA bending and partial unwinding. Promotes base flipping. Transcription termination activity appears to be polarized with highest specificity for transcripts initiated on the light strand. The chain is Transcription termination factor 1a, mitochondrial (Mterf1a) from Mus musculus (Mouse).